The following is a 330-amino-acid chain: GMP reductase (330 aa).

The active-site Thioimidate intermediate is cysteine 180. Residue 209-232 (LIADGGIRHNGDIAKSVRFGASMV) participates in NADP(+) binding.

This sequence belongs to the IMPDH/GMPR family. GuaC type 2 subfamily.

It carries out the reaction IMP + NH4(+) + NADP(+) = GMP + NADPH + 2 H(+). Its function is as follows. Catalyzes the irreversible NADPH-dependent deamination of GMP to IMP. It functions in the conversion of nucleobase, nucleoside and nucleotide derivatives of G to A nucleotides, and in maintaining the intracellular balance of A and G nucleotides. The sequence is that of GMP reductase from Lactobacillus delbrueckii subsp. bulgaricus (strain ATCC BAA-365 / Lb-18).